The chain runs to 84 residues: Toxin Ts4 (84 aa).

A signal peptide spans 1–19 (MKRMILFISCLLLIDIVVG). Residues 21–82 (REGYPADSKG…IWTSETNKCG (62 aa)) form the LCN-type CS-alpha/beta domain. 4 disulfide bridges follow: Cys31–Cys81, Cys35–Cys57, Cys43–Cys62, and Cys47–Cys64. Cysteine amide is present on Cys81. Residues 82–84 (GKK) constitute a propeptide that is removed on maturation.

Belongs to the long (4 C-C) scorpion toxin superfamily. Sodium channel inhibitor family. Alpha subfamily. Expressed by the venom gland.

The protein localises to the secreted. In terms of biological role, not toxic. Induces an immune response similar to that induced by whole venom. Induces a dose dependent release of the neurotransmitters glutamic acid and gamma aminobutyric acid from rat brain synaptosomes. Thus, polyclonal antibodies raised against this protein can neutralize the effects of the venom. The sequence is that of Toxin Ts4 from Tityus serrulatus (Brazilian scorpion).